A 585-amino-acid polypeptide reads, in one-letter code: PiggyBac transposable element-derived protein 4 (585 aa).

Residues 1-73 form a disordered region; sequence MSNPRKRSIP…STSSDSGRSM (73 aa). Positions 25–40 are enriched in acidic residues; sequence DSFDESDFSEIDDSDN. Positions 47–61 are enriched in basic and acidic residues; that stretch reads EADKIRPLSHLESDG. Residues 62 to 72 are compositionally biased toward low complexity; that stretch reads KSSTSSDSGRS.

The chain is PiggyBac transposable element-derived protein 4 (PGBD4) from Homo sapiens (Human).